The primary structure comprises 187 residues: Accessory gene regulator protein B (187 aa).

5 helical membrane passes run 49–69, 82–102, 107–127, 143–163, and 164–184; these read LAYI…FYLI, FWCY…VLHF, TLMM…APAA, YFSI…KEPY, and TQFI…IYYS.

This sequence belongs to the AgrB family.

The protein localises to the cell membrane. Functionally, essential for the production of a quorum sensing system signal molecule, the autoinducing peptide (AIP). This quorum sensing system is responsible for the regulation of the expression of virulence factor genes. Involved in the proteolytic processing of AgrD, the precursor of AIP. This Staphylococcus aureus (strain MRSA252) protein is Accessory gene regulator protein B.